The following is a 39-amino-acid chain: Cytochrome b6-f complex subunit 5 (39 aa).

Residues 5-25 (LLCGIVLGLVPITIVGLFVSA) form a helical membrane-spanning segment.

Belongs to the PetG family. The 4 large subunits of the cytochrome b6-f complex are cytochrome b6, subunit IV (17 kDa polypeptide, PetD), cytochrome f and the Rieske protein, while the 4 small subunits are PetG, PetL, PetM and PetN. The complex functions as a dimer.

It is found in the cellular thylakoid membrane. In terms of biological role, component of the cytochrome b6-f complex, which mediates electron transfer between photosystem II (PSII) and photosystem I (PSI), cyclic electron flow around PSI, and state transitions. PetG is required for either the stability or assembly of the cytochrome b6-f complex. This is Cytochrome b6-f complex subunit 5 from Prochlorococcus marinus (strain MIT 9211).